A 195-amino-acid chain; its full sequence is HTH-type transcriptional regulator BetI (195 aa).

Residues 8–68 (PIRRRQLIDA…ATMRDITSQL (61 aa)) enclose the HTH tetR-type domain. A DNA-binding region (H-T-H motif) is located at residues 31-50 (TIAQIARRAGVSTGIISHYF).

It participates in amine and polyamine biosynthesis; betaine biosynthesis via choline pathway [regulation]. In terms of biological role, repressor involved in the biosynthesis of the osmoprotectant glycine betaine. It represses transcription of the choline transporter BetT and the genes of BetAB involved in the synthesis of glycine betaine. The protein is HTH-type transcriptional regulator BetI of Klebsiella pneumoniae (strain 342).